The chain runs to 234 residues: Peroxisomal coenzyme A diphosphatase ndx-8 (234 aa).

A Nudix hydrolase domain is found at 27-162; it reads EQDAGVLILL…TFLIDEFYMV (136 aa). Positions 66–90 match the Nudix box motif; the sequence is GGMMDDEDGQNVRRTAIREAYEEVG. Mg(2+) is bound by residues Glu84 and Glu88. The chain crosses the membrane as a helical span at residues 170–190; that stretch reads YPTTYGVTALMCIVVAIGLLG. The Microbody targeting signal motif lies at 232-234; that stretch reads SKI.

The protein belongs to the Nudix hydrolase family. Mg(2+) serves as cofactor. Requires Mn(2+) as cofactor.

It localises to the peroxisome membrane. In terms of biological role, coenzyme A diphosphatase which mediates the cleavage of CoA into 3',5'-ADP and 4'-phosphopantetheine. In Caenorhabditis elegans, this protein is Peroxisomal coenzyme A diphosphatase ndx-8 (ndx-8).